Here is a 278-residue protein sequence, read N- to C-terminus: Sulfur carrier protein FdhD (278 aa).

Cys-121 acts as the Cysteine persulfide intermediate in catalysis. 260–265 provides a ligand contact to Mo-bis(molybdopterin guanine dinucleotide); sequence FCKPGR.

The protein belongs to the FdhD family.

The protein resides in the cytoplasm. Its function is as follows. Required for formate dehydrogenase (FDH) activity. Acts as a sulfur carrier protein that transfers sulfur from IscS to the molybdenum cofactor prior to its insertion into FDH. The sequence is that of Sulfur carrier protein FdhD from Salmonella agona (strain SL483).